Here is an 84-residue protein sequence, read N- to C-terminus: MAGRISAFLKNAWAKEPVLVVSFSVWGLAIIMPMISPYTKYASMINKATPYNYPVPVRDDGNMPDVPSHPQDPLGPSLDWLKNL.

Alanine 2 is modified (N-acetylalanine). A helical membrane pass occupies residues leucine 19–threonine 39. The segment at aspartate 59–leucine 84 is disordered.

It belongs to the complex I NDUFA3 subunit family. In terms of assembly, complex I is composed of 45 different subunits.

It is found in the mitochondrion inner membrane. Accessory subunit of the mitochondrial membrane respiratory chain NADH dehydrogenase (Complex I), that is believed not to be involved in catalysis. Complex I functions in the transfer of electrons from NADH to the respiratory chain. The immediate electron acceptor for the enzyme is believed to be ubiquinone. The chain is NADH dehydrogenase [ubiquinone] 1 alpha subcomplex subunit 3 (Ndufa3) from Mus musculus (Mouse).